Here is a 74-residue protein sequence, read N- to C-terminus: Small ribosomal subunit protein bS18 (74 aa).

Belongs to the bacterial ribosomal protein bS18 family. In terms of assembly, part of the 30S ribosomal subunit. Forms a tight heterodimer with protein bS6.

In terms of biological role, binds as a heterodimer with protein bS6 to the central domain of the 16S rRNA, where it helps stabilize the platform of the 30S subunit. The chain is Small ribosomal subunit protein bS18 from Coprothermobacter proteolyticus (strain ATCC 35245 / DSM 5265 / OCM 4 / BT).